Consider the following 329-residue polypeptide: Cysteine synthase (329 aa).

An N6-(pyridoxal phosphate)lysine modification is found at Lys48. Pyridoxal 5'-phosphate contacts are provided by residues Asn78, 183–187 (GTGGT), and Ser278.

Belongs to the cysteine synthase/cystathionine beta-synthase family. As to quaternary structure, homodimer. Requires pyridoxal 5'-phosphate as cofactor.

The catalysed reaction is O-acetyl-L-serine + hydrogen sulfide = L-cysteine + acetate. It participates in amino-acid biosynthesis; L-cysteine biosynthesis; L-cysteine from L-serine: step 2/2. Its function is as follows. Catalyzes the conversion of O-acetylserine (OAS) to cysteine through the elimination of acetate and addition of hydrogen sulfide. This is Cysteine synthase (srpG) from Synechococcus elongatus (strain ATCC 33912 / PCC 7942 / FACHB-805) (Anacystis nidulans R2).